Consider the following 141-residue polypeptide: Chorion protein S16 (141 aa).

Positions M1–A22 are cleaved as a signal peptide.

The protein belongs to the chorion protein S16 family.

Its subcellular location is the secreted. In terms of biological role, chorion membrane (egg shell) protein; plays a role in protecting the egg from the environment. The chain is Chorion protein S16 (Cp16) from Drosophila subobscura (Fruit fly).